Reading from the N-terminus, the 451-residue chain is uncharacterized protein (451 aa).

Disordered stretches follow at residues 89–150 and 164–222; these read PRLS…ISRY and QVGE…KTFG. Positions 104–121 are enriched in polar residues; that stretch reads QKPTISRESFVWESSASI. The segment covering 137–147 has biased composition (low complexity); the sequence is SSTPSIEPESI. Over residues 175-222 the composition is skewed to basic and acidic residues; it reads RAADSENERRPSEVREAPESRRRRETSETGSDKSKAPPPIKEIKKTFG. Residues 358 to 376 form a helical membrane-spanning segment; sequence LIGLMLFQTTIFIISKIIA. Residues 401–451 are disordered; sequence RNGSSSGFASGTSSPLVFIPRTKRPSLVPSEKKMRGPSVTRDLAAEQERDA. Low complexity predominate over residues 403-414; sequence GSSSGFASGTSS.

It belongs to the IIV-6 067R family.

It is found in the membrane. This is an uncharacterized protein from Invertebrate iridescent virus 3 (IIV-3).